Here is a 463-residue protein sequence, read N- to C-terminus: tRNA modification GTPase MnmE (463 aa).

(6S)-5-formyl-5,6,7,8-tetrahydrofolate-binding residues include arginine 27, glutamate 92, and lysine 131. Residues 234–386 (GIKLAIVGKP…LEDHLLKIYS (153 aa)) enclose the TrmE-type G domain. Asparagine 244 lines the K(+) pocket. Residues 244–249 (NVGKSS), 263–269 (TNVAGTT), and 288–291 (DTAG) contribute to the GTP site. A Mg(2+)-binding site is contributed by serine 248. Positions 263, 265, and 268 each coordinate K(+). Threonine 269 is a binding site for Mg(2+). (6S)-5-formyl-5,6,7,8-tetrahydrofolate is bound at residue lysine 463.

Belongs to the TRAFAC class TrmE-Era-EngA-EngB-Septin-like GTPase superfamily. TrmE GTPase family. In terms of assembly, homodimer. Heterotetramer of two MnmE and two MnmG subunits. K(+) is required as a cofactor.

Its subcellular location is the cytoplasm. In terms of biological role, exhibits a very high intrinsic GTPase hydrolysis rate. Involved in the addition of a carboxymethylaminomethyl (cmnm) group at the wobble position (U34) of certain tRNAs, forming tRNA-cmnm(5)s(2)U34. The polypeptide is tRNA modification GTPase MnmE (Mycoplasmopsis synoviae (strain 53) (Mycoplasma synoviae)).